We begin with the raw amino-acid sequence, 95 residues long: Protein TusB (95 aa).

Belongs to the DsrH/TusB family. Heterohexamer, formed by a dimer of trimers. The hexameric TusBCD complex contains 2 copies each of TusB, TusC and TusD. The TusBCD complex interacts with TusE.

It is found in the cytoplasm. Its function is as follows. Part of a sulfur-relay system required for 2-thiolation of 5-methylaminomethyl-2-thiouridine (mnm(5)s(2)U) at tRNA wobble positions. This Shigella sonnei (strain Ss046) protein is Protein TusB.